The sequence spans 267 residues: Endonuclease NucS (267 aa).

This sequence belongs to the NucS endonuclease family.

Its subcellular location is the cytoplasm. Its function is as follows. Cleaves both 3' and 5' ssDNA extremities of branched DNA structures. This chain is Endonuclease NucS, found in Pyrococcus furiosus (strain ATCC 43587 / DSM 3638 / JCM 8422 / Vc1).